The sequence spans 298 residues: ATP phosphoribosyltransferase (298 aa).

The protein belongs to the ATP phosphoribosyltransferase family.

The protein localises to the cytoplasm. The catalysed reaction is 1-(5-phospho-beta-D-ribosyl)-ATP + diphosphate = 5-phospho-alpha-D-ribose 1-diphosphate + ATP. The protein operates within amino-acid biosynthesis; L-histidine biosynthesis; L-histidine from 5-phospho-alpha-D-ribose 1-diphosphate: step 1/9. Its function is as follows. Catalyzes the condensation of ATP and 5-phosphoribose 1-diphosphate to form N'-(5'-phosphoribosyl)-ATP (PR-ATP). Has a crucial role in the pathway because the rate of histidine biosynthesis seems to be controlled primarily by regulation of the enzymatic activity. This Candida albicans (strain SC5314 / ATCC MYA-2876) (Yeast) protein is ATP phosphoribosyltransferase (HIS1).